We begin with the raw amino-acid sequence, 247 residues long: tRNA (guanine-N(1)-)-methyltransferase (247 aa).

Residues G113 and I133–M138 each bind S-adenosyl-L-methionine.

It belongs to the RNA methyltransferase TrmD family. Homodimer.

The protein localises to the cytoplasm. It catalyses the reaction guanosine(37) in tRNA + S-adenosyl-L-methionine = N(1)-methylguanosine(37) in tRNA + S-adenosyl-L-homocysteine + H(+). Specifically methylates guanosine-37 in various tRNAs. This chain is tRNA (guanine-N(1)-)-methyltransferase, found in Vibrio campbellii (strain ATCC BAA-1116).